The sequence spans 157 residues: Crossover junction endodeoxyribonuclease RuvC (157 aa).

Catalysis depends on residues aspartate 7, glutamate 66, and aspartate 139. Mg(2+) is bound by residues aspartate 7, glutamate 66, and aspartate 139.

Belongs to the RuvC family. In terms of assembly, homodimer which binds Holliday junction (HJ) DNA. The HJ becomes 2-fold symmetrical on binding to RuvC with unstacked arms; it has a different conformation from HJ DNA in complex with RuvA. In the full resolvosome a probable DNA-RuvA(4)-RuvB(12)-RuvC(2) complex forms which resolves the HJ. Mg(2+) serves as cofactor.

Its subcellular location is the cytoplasm. The enzyme catalyses Endonucleolytic cleavage at a junction such as a reciprocal single-stranded crossover between two homologous DNA duplexes (Holliday junction).. Functionally, the RuvA-RuvB-RuvC complex processes Holliday junction (HJ) DNA during genetic recombination and DNA repair. Endonuclease that resolves HJ intermediates. Cleaves cruciform DNA by making single-stranded nicks across the HJ at symmetrical positions within the homologous arms, yielding a 5'-phosphate and a 3'-hydroxyl group; requires a central core of homology in the junction. The consensus cleavage sequence is 5'-(A/T)TT(C/G)-3'. Cleavage occurs on the 3'-side of the TT dinucleotide at the point of strand exchange. HJ branch migration catalyzed by RuvA-RuvB allows RuvC to scan DNA until it finds its consensus sequence, where it cleaves and resolves the cruciform DNA. In Helicobacter pylori (strain P12), this protein is Crossover junction endodeoxyribonuclease RuvC.